The sequence spans 255 residues: MRLIALPAFDDNYIWALVAADGRAIIVDPGQAEPVLAAAQRQGLVPSAVLLTHHHGDHIGGVAELQQRWPDLALFGPADERIPTNAHHVGRGERLRLLDVEFQVIKVPGHTRSHIAFLADGHLFSGDTLFSLGCGRMFEGTAPQMFDSLQRLASLPGETLVCCGHEYTLANAAFALHVDPTNAALQRRQQEAQAMRHAARPTLPISLKSELATNPFLRTSHPEIRAAVAPRAASALSSEVDIFAELRRWKDEFRA.

The Zn(2+) site is built by histidine 53, histidine 55, aspartate 57, histidine 58, histidine 110, aspartate 127, and histidine 165.

Belongs to the metallo-beta-lactamase superfamily. Glyoxalase II family. As to quaternary structure, monomer. Zn(2+) serves as cofactor.

It carries out the reaction an S-(2-hydroxyacyl)glutathione + H2O = a 2-hydroxy carboxylate + glutathione + H(+). It participates in secondary metabolite metabolism; methylglyoxal degradation; (R)-lactate from methylglyoxal: step 2/2. Thiolesterase that catalyzes the hydrolysis of S-D-lactoyl-glutathione to form glutathione and D-lactic acid. This Xanthomonas axonopodis pv. citri (strain 306) protein is Hydroxyacylglutathione hydrolase.